Consider the following 968-residue polypeptide: RNA polymerase-associated protein RapA (968 aa).

In terms of domain architecture, Helicase ATP-binding spans aspartate 164–asparagine 334. Aspartate 177–threonine 184 lines the ATP pocket. The short motif at aspartate 280 to histidine 283 is the DEAH box element. The 196-residue stretch at arginine 490–arginine 685 folds into the Helicase C-terminal domain.

Belongs to the SNF2/RAD54 helicase family. RapA subfamily. Interacts with the RNAP. Has a higher affinity for the core RNAP than for the holoenzyme. Its ATPase activity is stimulated by binding to RNAP.

In terms of biological role, transcription regulator that activates transcription by stimulating RNA polymerase (RNAP) recycling in case of stress conditions such as supercoiled DNA or high salt concentrations. Probably acts by releasing the RNAP, when it is trapped or immobilized on tightly supercoiled DNA. Does not activate transcription on linear DNA. Probably not involved in DNA repair. The polypeptide is RNA polymerase-associated protein RapA (Salmonella choleraesuis (strain SC-B67)).